The primary structure comprises 252 residues: 3-dehydroquinate dehydratase (252 aa).

Residues 46–48 (EWR) and arginine 82 each bind 3-dehydroquinate. The active-site Proton donor/acceptor is the histidine 143. Residue lysine 170 is the Schiff-base intermediate with substrate of the active site. 3 residues coordinate 3-dehydroquinate: arginine 212, serine 231, and glutamine 235.

Belongs to the type-I 3-dehydroquinase family. As to quaternary structure, homodimer.

The enzyme catalyses 3-dehydroquinate = 3-dehydroshikimate + H2O. It participates in metabolic intermediate biosynthesis; chorismate biosynthesis; chorismate from D-erythrose 4-phosphate and phosphoenolpyruvate: step 3/7. Functionally, involved in the third step of the chorismate pathway, which leads to the biosynthesis of aromatic amino acids. Catalyzes the cis-dehydration of 3-dehydroquinate (DHQ) and introduces the first double bond of the aromatic ring to yield 3-dehydroshikimate. This is 3-dehydroquinate dehydratase from Listeria monocytogenes serotype 4b (strain CLIP80459).